Here is a 430-residue protein sequence, read N- to C-terminus: Histidinol dehydrogenase (430 aa).

Residues Tyr129, Gln190, and Asn213 each coordinate NAD(+). Positions 236, 258, and 261 each coordinate substrate. Residues Gln258 and His261 each coordinate Zn(2+). Catalysis depends on proton acceptor residues Glu326 and His327. His327, Asp360, Glu414, and His419 together coordinate substrate. Asp360 provides a ligand contact to Zn(2+). His419 lines the Zn(2+) pocket.

The protein belongs to the histidinol dehydrogenase family. The cofactor is Zn(2+).

It carries out the reaction L-histidinol + 2 NAD(+) + H2O = L-histidine + 2 NADH + 3 H(+). Its pathway is amino-acid biosynthesis; L-histidine biosynthesis; L-histidine from 5-phospho-alpha-D-ribose 1-diphosphate: step 9/9. In terms of biological role, catalyzes the sequential NAD-dependent oxidations of L-histidinol to L-histidinaldehyde and then to L-histidine. The polypeptide is Histidinol dehydrogenase (Caldanaerobacter subterraneus subsp. tengcongensis (strain DSM 15242 / JCM 11007 / NBRC 100824 / MB4) (Thermoanaerobacter tengcongensis)).